A 143-amino-acid polypeptide reads, in one-letter code: Large ribosomal subunit protein uL15 (143 aa).

The interval 1-52 (MKLNTLAPAAGSKSAPKRLGRGIGSGLGKTSGKGHKGQKARSGGYHKVGFEG) is disordered. The segment covering 21–31 (RGIGSGLGKTS) has biased composition (gly residues).

The protein belongs to the universal ribosomal protein uL15 family. Part of the 50S ribosomal subunit.

Binds to the 23S rRNA. The sequence is that of Large ribosomal subunit protein uL15 from Francisella tularensis subsp. novicida (strain U112).